The primary structure comprises 764 residues: Nucleolar transcription factor 1 (764 aa).

Met1 carries the post-translational modification N-acetylmethionine. Residues 1–21 form a disordered region; sequence MNGEADCPTDLEMAAPKGQDR. DNA-binding regions (HMG box) lie at residues 112–180 and 196–264; these read PKKP…ARFR and PEKP…RDYI. A Phosphothreonine modification is found at Thr201. Phosphoserine is present on residues Ser273, Ser336, Ser364, Ser389, Ser412, Ser433, Ser435, Ser484, Ser495, Ser546, Ser584, and Ser638. Residues 298 to 362 constitute a DNA-binding region (HMG box 3); the sequence is TKPPPNSYSL…DYEVELLRFL (65 aa). The tract at residues 381–411 is disordered; the sequence is NINKKQATSPASKKPAQEGGKGGSEKPKRPV. 3 consecutive DNA-binding regions (HMG box) follow at residues 407–475, 482–549, and 568–634; these read PKRP…GGER, PESP…SEMR, and KKPP…DLWV. A disordered region spans residues 459-487; that stretch reads REAALKAQSERKPGGEREERGKLPESPKR. The segment at 546–576 is disordered; the sequence is SEMRAPPAATNSSKKMKFQGEPKKPPMNGYQ. The disordered stretch occupies residues 648 to 764; that stretch reads YISNKRKSMT…SGDSSDSDSN (117 aa). Positions 664 to 674 are enriched in polar residues; the sequence is PKSSRTTLQSK. Residues 677–745 are compositionally biased toward acidic residues; that stretch reads SEEDDEEDED…DDDEDEDNES (69 aa). Low complexity predominate over residues 746 to 758; that stretch reads EGSSSSSSSSGDS.

Homodimer. Part of Pol I pre-initiation complex (PIC), in which Pol I core assembles with RRN3 and promoter-bound UTBF and SL1/TIF-IB complex. Interacts with TOP2A in the context of Pol I complex. Interacts with TBP. Interacts with TAF1A. Interacts with RASL11A. Binds to IRS1 and PIK3CA. Interacts with DHX33. Interacts with PHF6. Interacts with CEBPA (isoform 1 and isoform 4). Interacts with DDX11. Interacts with NOP53. Interacts with ALKBH2. Post-translationally, phosphorylated and activated by PIK3CA.

It localises to the nucleus. It is found in the nucleolus. Recognizes the ribosomal RNA gene promoter and activates transcription mediated by RNA polymerase I (Pol I) through cooperative interactions with the transcription factor SL1/TIF-IB complex. It binds specifically to the upstream control element and can activate Pol I promoter escape. The sequence is that of Nucleolar transcription factor 1 (UBTF) from Homo sapiens (Human).